The following is a 160-amino-acid chain: Inner membrane protein YcdZ (160 aa).

A run of 5 helical transmembrane segments spans residues 20–42 (WGAV…YFAC), 50–70 (LLIS…IIHG), 72–92 (ALAP…AFLM), 99–119 (LLLS…AGQG), and 123–143 (LVLP…NSGL).

It to E.coli YahC.

The protein localises to the cell inner membrane. This Salmonella typhimurium (strain LT2 / SGSC1412 / ATCC 700720) protein is Inner membrane protein YcdZ (ycdZ).